A 343-amino-acid chain; its full sequence is N-acetylornithine carbamoyltransferase (343 aa).

Residues 49 to 52 (SMRT), tryptophan 77, and arginine 112 each bind carbamoyl phosphate. Glutamate 144 provides a ligand contact to N(2)-acetyl-L-ornithine. Residue 148-151 (HPCQ) participates in carbamoyl phosphate binding. Positions 252 and 295 each coordinate N(2)-acetyl-L-ornithine. 294–295 (CL) lines the carbamoyl phosphate pocket. N6-carboxylysine is present on lysine 302. Position 322 (arginine 322) interacts with carbamoyl phosphate.

It belongs to the aspartate/ornithine carbamoyltransferase superfamily. AOTCase family. In terms of assembly, homotrimer.

Its subcellular location is the cytoplasm. It carries out the reaction N(2)-acetyl-L-ornithine + carbamoyl phosphate = N(2)-acetyl-L-citrulline + phosphate + H(+). It functions in the pathway amino-acid biosynthesis; L-arginine biosynthesis. Carboxylation at Lys-302 increases the catalytic activity of the enzyme. Functionally, catalyzes the transfer of the carbamoyl group from carbamoyl phosphate to the delta-amino group of N(2)-acetyl-L-ornithine to produce N(2)-acetyl-L-citrulline. This is a step in an alternative arginine biosynthesis pathway. The enzyme has no activity with ornithine. In Xanthomonas axonopodis pv. citri (strain 306), this protein is N-acetylornithine carbamoyltransferase.